Consider the following 506-residue polypeptide: 2,3-bisphosphoglycerate-independent phosphoglycerate mutase (506 aa).

Mn(2+)-binding residues include Asp13 and Ser63. The active-site Phosphoserine intermediate is the Ser63. Substrate contacts are provided by residues His124, Arg153 to Asp154, Arg183, Arg189, Arg254 to Arg257, and Lys330. Mn(2+) contacts are provided by Asp396, His400, Asp437, His438, and His456.

The protein belongs to the BPG-independent phosphoglycerate mutase family. Monomer. The cofactor is Mn(2+).

The catalysed reaction is (2R)-2-phosphoglycerate = (2R)-3-phosphoglycerate. The protein operates within carbohydrate degradation; glycolysis; pyruvate from D-glyceraldehyde 3-phosphate: step 3/5. In terms of biological role, catalyzes the interconversion of 2-phosphoglycerate and 3-phosphoglycerate. This Cereibacter sphaeroides (strain ATCC 17025 / ATH 2.4.3) (Rhodobacter sphaeroides) protein is 2,3-bisphosphoglycerate-independent phosphoglycerate mutase.